A 285-amino-acid polypeptide reads, in one-letter code: MNAHSSLLPICKKATAHIAFSKAPSGISYVSRQEVGYPFHLGRTLKLPQDPPGMAAIYLQSCSGGLFAGETLHLQLHAGPHTQVHVSTGAATVAHSMLEQPARQTVTLIAETGALLEYLPMATILFPQARLHSVVNVTLHPNARVMLCDAFCLHVPPGSAGLPGFYRADLHIRCPAGTLLAGDRLALTGADLQRRLPGVSAELQALATFMLVGQDLPVDELKRALRDALRVVPESYLGVSALPNDCGVSVRIMTADAVALRSALHLAWACARQQLTGIAPRVRRK.

This sequence belongs to the UreD family. As to quaternary structure, ureD, UreF and UreG form a complex that acts as a GTP-hydrolysis-dependent molecular chaperone, activating the urease apoprotein by helping to assemble the nickel containing metallocenter of UreC. The UreE protein probably delivers the nickel.

It is found in the cytoplasm. Required for maturation of urease via the functional incorporation of the urease nickel metallocenter. The chain is Urease accessory protein UreD 1 from Pseudomonas syringae pv. tomato (strain ATCC BAA-871 / DC3000).